Consider the following 278-residue polypeptide: Tryptophan synthase alpha chain (278 aa).

Catalysis depends on proton acceptor residues glutamate 50 and aspartate 61.

Belongs to the TrpA family. As to quaternary structure, tetramer of two alpha and two beta chains.

The enzyme catalyses (1S,2R)-1-C-(indol-3-yl)glycerol 3-phosphate + L-serine = D-glyceraldehyde 3-phosphate + L-tryptophan + H2O. It functions in the pathway amino-acid biosynthesis; L-tryptophan biosynthesis; L-tryptophan from chorismate: step 5/5. The alpha subunit is responsible for the aldol cleavage of indoleglycerol phosphate to indole and glyceraldehyde 3-phosphate. This chain is Tryptophan synthase alpha chain, found in Rhodopseudomonas palustris (strain BisA53).